The following is a 265-amino-acid chain: Mlc titration factor A (265 aa).

Residues His-111, His-148, His-152, and Glu-211 each coordinate Zn(2+).

This sequence belongs to the MtfA family. As to quaternary structure, interacts with Mlc. It depends on Zn(2+) as a cofactor.

The protein localises to the cytoplasm. In terms of biological role, involved in the modulation of the activity of the glucose-phosphotransferase system (glucose-PTS). Interacts with the transcriptional repressor Mlc, preventing its interaction with DNA and leading to the modulation of expression of genes regulated by Mlc, including ptsG, which encodes the PTS system glucose-specific EIICB component. Its function is as follows. Shows zinc-dependent metallopeptidase activity. In Salmonella choleraesuis (strain SC-B67), this protein is Mlc titration factor A.